Here is a 203-residue protein sequence, read N- to C-terminus: Urease accessory protein UreG (203 aa).

14–21 (GPVGSGKT) is a GTP binding site.

This sequence belongs to the SIMIBI class G3E GTPase family. UreG subfamily. In terms of assembly, homodimer. UreD, UreF and UreG form a complex that acts as a GTP-hydrolysis-dependent molecular chaperone, activating the urease apoprotein by helping to assemble the nickel containing metallocenter of UreC. The UreE protein probably delivers the nickel.

It is found in the cytoplasm. Its function is as follows. Facilitates the functional incorporation of the urease nickel metallocenter. This process requires GTP hydrolysis, probably effectuated by UreG. This chain is Urease accessory protein UreG, found in Rhizobium rhizogenes (strain K84 / ATCC BAA-868) (Agrobacterium radiobacter).